The sequence spans 159 residues: Ribosomal RNA large subunit methyltransferase H (159 aa).

S-adenosyl-L-methionine contacts are provided by residues Leu-76, Gly-108, and 127–132 (FSKMTF).

This sequence belongs to the RNA methyltransferase RlmH family. In terms of assembly, homodimer.

Its subcellular location is the cytoplasm. The enzyme catalyses pseudouridine(1915) in 23S rRNA + S-adenosyl-L-methionine = N(3)-methylpseudouridine(1915) in 23S rRNA + S-adenosyl-L-homocysteine + H(+). Specifically methylates the pseudouridine at position 1915 (m3Psi1915) in 23S rRNA. The sequence is that of Ribosomal RNA large subunit methyltransferase H from Geobacillus thermodenitrificans (strain NG80-2).